Reading from the N-terminus, the 321-residue chain is Ribosomal RNA small subunit methyltransferase H (321 aa).

S-adenosyl-L-methionine is bound by residues 40-42, D60, F84, D106, and Q113; that span reads GGH.

The protein belongs to the methyltransferase superfamily. RsmH family.

The protein localises to the cytoplasm. It catalyses the reaction cytidine(1402) in 16S rRNA + S-adenosyl-L-methionine = N(4)-methylcytidine(1402) in 16S rRNA + S-adenosyl-L-homocysteine + H(+). In terms of biological role, specifically methylates the N4 position of cytidine in position 1402 (C1402) of 16S rRNA. The sequence is that of Ribosomal RNA small subunit methyltransferase H from Histophilus somni (strain 2336) (Haemophilus somnus).